A 139-amino-acid polypeptide reads, in one-letter code: Putative pre-16S rRNA nuclease (139 aa).

This sequence belongs to the YqgF nuclease family.

It is found in the cytoplasm. Functionally, could be a nuclease involved in processing of the 5'-end of pre-16S rRNA. This is Putative pre-16S rRNA nuclease from Haemophilus influenzae (strain 86-028NP).